Consider the following 295-residue polypeptide: Bifunctional protein FolD (295 aa).

NADP(+) contacts are provided by residues 169–171 (GRS), S194, and I235.

The protein belongs to the tetrahydrofolate dehydrogenase/cyclohydrolase family. Homodimer.

The catalysed reaction is (6R)-5,10-methylene-5,6,7,8-tetrahydrofolate + NADP(+) = (6R)-5,10-methenyltetrahydrofolate + NADPH. It catalyses the reaction (6R)-5,10-methenyltetrahydrofolate + H2O = (6R)-10-formyltetrahydrofolate + H(+). It participates in one-carbon metabolism; tetrahydrofolate interconversion. Functionally, catalyzes the oxidation of 5,10-methylenetetrahydrofolate to 5,10-methenyltetrahydrofolate and then the hydrolysis of 5,10-methenyltetrahydrofolate to 10-formyltetrahydrofolate. This Acaryochloris marina (strain MBIC 11017) protein is Bifunctional protein FolD.